Reading from the N-terminus, the 233-residue chain is Protein lin-7 homolog A (233 aa).

Positions 14-28 match the Kinase interacting site motif; it reads MATLTVVQPLTLDRD. The region spanning 25–80 is the L27 domain; sequence LDRDVARAIELLEKLQESGEVPVHKLQSLKKVLQSEFCTAIREVYQYMHETITVNG. Positions 108-190 constitute a PDZ domain; that stretch reads VVELPKTDEG…SVKLVVRYTP (83 aa). Positions 214 to 233 are disordered; sequence LLIQQQQQQQQQQPQQNHMS.

Belongs to the lin-7 family. As to quaternary structure, forms a complex with CASK and CASKIN1. Component of the brain-specific heterotrimeric complex (LIN-10-LIN-2-LIN-7 complex) composed of at least APBA1, CASK, and LIN7, which associates with the motor protein KIF17 to transport vesicles along microtubules. Can also interact with other modular proteins containing protein-protein interaction domains like PALS1, PALS2, MPP7, DLG1, DLG2 and DLG3 through its L27 domain. Interacts with DLG4, GRIN2B and MARCHF11 as well as CDH1 and CTNNB1, the channels KCNJ12/Kir2.2, KCNJ4/Kir2.3 and probably KCNJ2/Kir2.1 and SLC6A12/BGT-1 via its PDZ domain. The association of LIN7A with cadherin and beta-catenin is calcium-dependent, occurs at synaptic junctions and requires the actin cytoskeleton. Interacts with EGFR, ERBB2, ERBB3 and ERBB4 with both PDZ and KID domains. Associates with KIF17 via APBA1. Interacts with HTR4. Forms a tripartite complex composed of DLG1, MPP7 and LIN7 (LIN7A or LIN7C). Expressed in the kidney, along the length of the nephron.

Its subcellular location is the cell membrane. The protein resides in the basolateral cell membrane. The protein localises to the cell junction. It localises to the postsynaptic density membrane. It is found in the tight junction. Plays a role in establishing and maintaining the asymmetric distribution of channels and receptors at the plasma membrane of polarized cells. Forms membrane-associated multiprotein complexes that may regulate delivery and recycling of proteins to the correct membrane domains. The tripartite complex composed of LIN7 (LIN7A, LIN7B or LIN7C), CASK and APBA1 associates with the motor protein KIF17 to transport vesicles containing N-methyl-D-aspartate (NMDA) receptor subunit NR2B along microtubules. This complex may have the potential to couple synaptic vesicle exocytosis to cell adhesion in brain. Ensures the proper localization of GRIN2B (subunit 2B of the NMDA receptor) to neuronal postsynaptic density and may function in localizing synaptic vesicles at synapses where it is recruited by beta-catenin and cadherin. Required to localize Kir2 channels, GABA transporter (SLC6A12) and EGFR/ERBB1, ERBB2, ERBB3 and ERBB4 to the basolateral membrane of epithelial cells. The protein is Protein lin-7 homolog A (Lin7a) of Mus musculus (Mouse).